Here is a 90-residue protein sequence, read N- to C-terminus: Signal recognition particle 19 kDa protein (90 aa).

It belongs to the SRP19 family. As to quaternary structure, part of the signal recognition particle protein translocation system, which is composed of SRP and FtsY. Archaeal SRP consists of a 7S RNA molecule of 300 nucleotides and two protein subunits: SRP54 and SRP19.

Its subcellular location is the cytoplasm. Functionally, involved in targeting and insertion of nascent membrane proteins into the cytoplasmic membrane. Binds directly to 7S RNA and mediates binding of the 54 kDa subunit of the SRP. The chain is Signal recognition particle 19 kDa protein from Methanococcus aeolicus (strain ATCC BAA-1280 / DSM 17508 / OCM 812 / Nankai-3).